Here is a 630-residue protein sequence, read N- to C-terminus: Plastin-3 (630 aa).

2 consecutive EF-hand domains span residues 12 to 47 (DELDELKEAFAKVDLNSNGFICDYELHELFKEANMP) and 52 to 87 (KVREIIQKLMLDGDRNKDGKISFDEFVYIFQEVKSS). Positions 25, 27, 29, 36, 65, 67, 69, 71, and 76 each coordinate Ca(2+). Actin-binding stretches follow at residues 109–382 (TSEL…ALTK) and 383–627 (PENQ…GRGM). Calponin-homology (CH) domains are found at residues 123-239 (EEEK…KIGL) and 267-378 (LSPE…NKYP). Ser-268, Ser-293, Ser-326, and Ser-339 each carry phosphoserine. At Thr-391 the chain carries Phosphothreonine. Calponin-homology (CH) domains lie at 397 to 506 (TREE…RRYT) and 518 to 627 (KAND…GRGM).

As to quaternary structure, monomer. Expressed in a variety of organs, including muscle, brain, uterus and esophagus.

Its subcellular location is the cytoplasm. Functionally, actin-bundling protein. The polypeptide is Plastin-3 (PLS3) (Homo sapiens (Human)).